The chain runs to 241 residues: Agamous-like MADS-box protein AGL9 homolog (241 aa).

In terms of domain architecture, MADS-box spans Arg3–Phe57. The K-box domain occupies Glu89–Leu179.

The protein resides in the nucleus. Probable transcription factor. The sequence is that of Agamous-like MADS-box protein AGL9 homolog (FBP2) from Petunia hybrida (Petunia).